The following is a 464-amino-acid chain: tRNA modification GTPase MnmE (464 aa).

3 residues coordinate (6S)-5-formyl-5,6,7,8-tetrahydrofolate: Arg27, Glu90, and Lys129. Residues 222–384 (GVTLVLAGSV…LYDRIRSFIA (163 aa)) form the TrmE-type G domain. GTP contacts are provided by residues 232–237 (NVGKSS), 251–257 (SSYAGTT), and 276–279 (DTAG). Ser236 is a binding site for Mg(2+). Ser251 contacts K(+). Thr257 is a Mg(2+) binding site. Lys464 is a (6S)-5-formyl-5,6,7,8-tetrahydrofolate binding site.

It belongs to the TRAFAC class TrmE-Era-EngA-EngB-Septin-like GTPase superfamily. TrmE GTPase family. Homodimer. Heterotetramer of two MnmE and two MnmG subunits. K(+) is required as a cofactor.

It localises to the cytoplasm. Its function is as follows. Exhibits a very high intrinsic GTPase hydrolysis rate. Involved in the addition of a carboxymethylaminomethyl (cmnm) group at the wobble position (U34) of certain tRNAs, forming tRNA-cmnm(5)s(2)U34. The chain is tRNA modification GTPase MnmE from Borrelia recurrentis (strain A1).